Reading from the N-terminus, the 179-residue chain is ATP synthase subunit b (179 aa).

A helical transmembrane segment spans residues 23-43; the sequence is IVVGLVAFGLLAFVLMKFVFP.

The protein belongs to the ATPase B chain family. F-type ATPases have 2 components, F(1) - the catalytic core - and F(0) - the membrane proton channel. F(1) has five subunits: alpha(3), beta(3), gamma(1), delta(1), epsilon(1). F(0) has three main subunits: a(1), b(2) and c(10-14). The alpha and beta chains form an alternating ring which encloses part of the gamma chain. F(1) is attached to F(0) by a central stalk formed by the gamma and epsilon chains, while a peripheral stalk is formed by the delta and b chains.

The protein localises to the cell membrane. F(1)F(0) ATP synthase produces ATP from ADP in the presence of a proton or sodium gradient. F-type ATPases consist of two structural domains, F(1) containing the extramembraneous catalytic core and F(0) containing the membrane proton channel, linked together by a central stalk and a peripheral stalk. During catalysis, ATP synthesis in the catalytic domain of F(1) is coupled via a rotary mechanism of the central stalk subunits to proton translocation. Its function is as follows. Component of the F(0) channel, it forms part of the peripheral stalk, linking F(1) to F(0). This chain is ATP synthase subunit b, found in Salinispora arenicola (strain CNS-205).